Reading from the N-terminus, the 386-residue chain is Flap endonuclease 1 (386 aa).

Residues 1–104 (MGILGLSKLI…GELAKRAERR (104 aa)) form an N-domain region. Mg(2+) is bound at residue Asp34. DNA-binding residues include Arg47 and Arg70. Mg(2+) is bound by residues Asp86, Glu158, Glu160, Asp179, and Asp181. The tract at residues 122–253 (EIEKFNRRLV…KRAIELINNY (132 aa)) is I-domain. Glu158 contributes to the DNA binding site. 2 residues coordinate DNA: Gly231 and Asp233. Asp233 lines the Mg(2+) pocket. Positions 336–344 (TQVRLDSFF) are interaction with PCNA. A disordered region spans residues 354 to 386 (VNAAKRKAEEAKKSANNKKAKTSGGAARGRRPK).

Belongs to the XPG/RAD2 endonuclease family. FEN1 subfamily. In terms of assembly, interacts with PCNA. Three molecules of FEN1 bind to one PCNA trimer with each molecule binding to one PCNA monomer. PCNA stimulates the nuclease activity without altering cleavage specificity. It depends on Mg(2+) as a cofactor. In terms of processing, phosphorylated. Phosphorylation upon DNA damage induces relocalization to the nuclear plasma.

It is found in the nucleus. The protein localises to the nucleolus. The protein resides in the nucleoplasm. It localises to the mitochondrion. In terms of biological role, structure-specific nuclease with 5'-flap endonuclease and 5'-3' exonuclease activities involved in DNA replication and repair. During DNA replication, cleaves the 5'-overhanging flap structure that is generated by displacement synthesis when DNA polymerase encounters the 5'-end of a downstream Okazaki fragment. It enters the flap from the 5'-end and then tracks to cleave the flap base, leaving a nick for ligation. Also involved in the long patch base excision repair (LP-BER) pathway, by cleaving within the apurinic/apyrimidinic (AP) site-terminated flap. Acts as a genome stabilization factor that prevents flaps from equilibrating into structures that lead to duplications and deletions. Also possesses 5'-3' exonuclease activity on nicked or gapped double-stranded DNA, and exhibits RNase H activity. Also involved in replication and repair of rDNA and in repairing mitochondrial DNA. In Drosophila pseudoobscura pseudoobscura (Fruit fly), this protein is Flap endonuclease 1.